Reading from the N-terminus, the 129-residue chain is Small ribosomal subunit protein uS11 (129 aa).

Belongs to the universal ribosomal protein uS11 family. In terms of assembly, part of the 30S ribosomal subunit. Interacts with proteins S7 and S18. Binds to IF-3.

Functionally, located on the platform of the 30S subunit, it bridges several disparate RNA helices of the 16S rRNA. Forms part of the Shine-Dalgarno cleft in the 70S ribosome. This is Small ribosomal subunit protein uS11 from Geobacillus kaustophilus (strain HTA426).